The chain runs to 458 residues: Exodeoxyribonuclease 7 large subunit (458 aa).

This sequence belongs to the XseA family. As to quaternary structure, heterooligomer composed of large and small subunits.

It is found in the cytoplasm. The catalysed reaction is Exonucleolytic cleavage in either 5'- to 3'- or 3'- to 5'-direction to yield nucleoside 5'-phosphates.. Its function is as follows. Bidirectionally degrades single-stranded DNA into large acid-insoluble oligonucleotides, which are then degraded further into small acid-soluble oligonucleotides. This chain is Exodeoxyribonuclease 7 large subunit, found in Stutzerimonas stutzeri (strain A1501) (Pseudomonas stutzeri).